The following is a 488-amino-acid chain: Cobyric acid synthase (488 aa).

The GATase cobBQ-type domain maps to 252 to 442 (RTRICVPILP…VHGLFASDAF (191 aa)). The active-site Nucleophile is the Cys-334. Residue His-434 is part of the active site.

Belongs to the CobB/CobQ family. CobQ subfamily.

It participates in cofactor biosynthesis; adenosylcobalamin biosynthesis. In terms of biological role, catalyzes amidations at positions B, D, E, and G on adenosylcobyrinic A,C-diamide. NH(2) groups are provided by glutamine, and one molecule of ATP is hydrogenolyzed for each amidation. This Xanthobacter autotrophicus (strain ATCC BAA-1158 / Py2) protein is Cobyric acid synthase.